The sequence spans 188 residues: Ion-translocating oxidoreductase complex subunit B (188 aa).

Positions 1–23 (MIEAAVSMSALGLGLGLLLGVAA) are hydrophobic. Residues 29–88 (ESPPILDAIEGILPGTNCGACGYPGCRGLAEAMSEGAAPVTACAPGGRDVALALAAIVET) form the 4Fe-4S domain. The [4Fe-4S] cluster site is built by Cys46, Cys49, Cys54, Cys71, Cys113, Cys116, Cys119, Cys123, Cys143, Cys146, Cys149, and Cys153. 4Fe-4S ferredoxin-type domains are found at residues 104-133 (TVAFIFEDHCTGCMRCFKRCPTDAIIGANR) and 134-163 (QIHTVVTDACIGCNACIEACPTEAIVARVK).

This sequence belongs to the 4Fe4S bacterial-type ferredoxin family. RnfB subfamily. As to quaternary structure, the complex is composed of six subunits: RnfA, RnfB, RnfC, RnfD, RnfE and RnfG. Requires [4Fe-4S] cluster as cofactor.

The protein localises to the cellular chromatophore membrane. Its function is as follows. Part of a membrane-bound complex that couples electron transfer with translocation of ions across the membrane. This Cereibacter sphaeroides (strain ATCC 17029 / ATH 2.4.9) (Rhodobacter sphaeroides) protein is Ion-translocating oxidoreductase complex subunit B.